Here is a 248-residue protein sequence, read N- to C-terminus: NH(3)-dependent NAD(+) synthetase (248 aa).

Position 30–37 (30–37 (GLSGGIDS)) interacts with ATP. D36 serves as a coordination point for Mg(2+). R114 is a binding site for deamido-NAD(+). Position 134 (T134) interacts with ATP. Residue E139 coordinates Mg(2+). Positions 147 and 154 each coordinate deamido-NAD(+). ATP-binding residues include K163 and T185. 232–233 (HK) serves as a coordination point for deamido-NAD(+).

It belongs to the NAD synthetase family. In terms of assembly, homodimer.

It catalyses the reaction deamido-NAD(+) + NH4(+) + ATP = AMP + diphosphate + NAD(+) + H(+). It participates in cofactor biosynthesis; NAD(+) biosynthesis; NAD(+) from deamido-NAD(+) (ammonia route): step 1/1. Its function is as follows. Catalyzes the ATP-dependent amidation of deamido-NAD to form NAD. Uses ammonia as a nitrogen source. The chain is NH(3)-dependent NAD(+) synthetase from Mycoplasma genitalium (strain ATCC 33530 / DSM 19775 / NCTC 10195 / G37) (Mycoplasmoides genitalium).